The following is a 478-amino-acid chain: Bifunctional protein HldE (478 aa).

The tract at residues 1–318 is ribokinase; the sequence is MKVTLPDFRQ…ENAIRGRADT (318 aa). An ATP-binding site is contributed by 195-198; that stretch reads NLSE. D264 is a catalytic residue. A cytidylyltransferase region spans residues 344–478; that stretch reads MTNGCFDILH…NMIKASTSQS (135 aa).

In the N-terminal section; belongs to the carbohydrate kinase PfkB family. The protein in the C-terminal section; belongs to the cytidylyltransferase family. Homodimer.

It carries out the reaction D-glycero-beta-D-manno-heptose 7-phosphate + ATP = D-glycero-beta-D-manno-heptose 1,7-bisphosphate + ADP + H(+). The enzyme catalyses D-glycero-beta-D-manno-heptose 1-phosphate + ATP + H(+) = ADP-D-glycero-beta-D-manno-heptose + diphosphate. It participates in nucleotide-sugar biosynthesis; ADP-L-glycero-beta-D-manno-heptose biosynthesis; ADP-L-glycero-beta-D-manno-heptose from D-glycero-beta-D-manno-heptose 7-phosphate: step 1/4. It functions in the pathway nucleotide-sugar biosynthesis; ADP-L-glycero-beta-D-manno-heptose biosynthesis; ADP-L-glycero-beta-D-manno-heptose from D-glycero-beta-D-manno-heptose 7-phosphate: step 3/4. Functionally, catalyzes the phosphorylation of D-glycero-D-manno-heptose 7-phosphate at the C-1 position to selectively form D-glycero-beta-D-manno-heptose-1,7-bisphosphate. Its function is as follows. Catalyzes the ADP transfer from ATP to D-glycero-beta-D-manno-heptose 1-phosphate, yielding ADP-D-glycero-beta-D-manno-heptose. In Pectobacterium atrosepticum (strain SCRI 1043 / ATCC BAA-672) (Erwinia carotovora subsp. atroseptica), this protein is Bifunctional protein HldE.